The primary structure comprises 664 residues: Protein SIEVE ELEMENT OCCLUSION C (664 aa).

The chain is Protein SIEVE ELEMENT OCCLUSION C from Arabidopsis thaliana (Mouse-ear cress).